Consider the following 568-residue polypeptide: Zinc finger protein 768 (568 aa).

A compositionally biased stretch (basic and acidic residues) spans 1-16 (MEREASSWGLESRDVH). 3 disordered regions span residues 1–223 (MERE…SLGV), 228–247 (SFTQ…FDMP), and 264–287 (LNLT…QGPR). Phosphoserine is present on residues Ser17, Ser23, and Ser27. Thr35 bears the Phosphothreonine mark. Phosphoserine occurs at positions 36, 65, 72, 79, 86, 93, 100, 107, 114, 121, 128, 135, and 149. Residues 62 to 80 (EPQSPEFEPQSPEFESQSP) show a composition bias toward low complexity. Residues 110–122 (SDPQSPEFESQSP) show a composition bias toward polar residues. Tyr152 is subject to Phosphotyrosine. Ser154 is subject to Phosphoserine. A compositionally biased stretch (polar residues) spans 159–186 (FESQSPGYESQSPGYEPQNSGDGVQNSE). A Phosphothreonine modification is found at Thr189. Position 191 is a phosphoserine (Ser191). A C2H2-type 1 zinc finger spans residues 289–311 (NICGICGKSFGRGSTLIQHQRIH). Phosphothreonine is present on Thr312. Tyr317 is modified (phosphotyrosine). C2H2-type zinc fingers lie at residues 317 to 339 (YKCE…QRTH), 345 to 367 (YKCP…QRTH), 373 to 395 (YKCP…QRTH), and 401 to 423 (YSCP…QRVH). A phosphoserine mark is found at Ser323 and Ser327. Phosphothreonine is present on Thr424. C2H2-type zinc fingers lie at residues 429-451 (FSCG…ARSH), 457-479 (FKCP…ARTH), 485-507 (YSCP…QRSH), 513-535 (YRCA…HRVH), and 541-563 (YKCD…QRTH). Phosphoserine is present on Ser470.

Belongs to the krueppel C2H2-type zinc-finger protein family. As to quaternary structure, interacts (via zinc-finger domains) with TP53 (via N-terminus); interaction might be facilitated by TP53 oligomerization state. Interacts with ELP3. Post-translationally, may be phosphorylated at residue 'Ser-5' of the tandem heptapeptide repeats in the N-terminus. Phosphorylation might be increased upon RAS pathway activation and negatively regulate protein stability.

It is found in the nucleus. Its subcellular location is the chromosome. In terms of biological role, binds to mammalian-wide interspersed repeat (MIRs) sequences in euchromatin and promoter regions of genes at the consensus sequence 5'-GCTGTGTG-[N20]-CCTCTCTG-3', consisting of two anchor regions connected by a linker region; the linker region probably does not contribute to the binding specificity. Required for cell homeostasis. May be involved in transcriptional regulation. The sequence is that of Zinc finger protein 768 (Znf768) from Mus musculus (Mouse).